The chain runs to 212 residues: Phosphoribosylformylglycinamidine synthase subunit PurQ (212 aa).

Positions 2 to 212 constitute a Glutamine amidotransferase type-1 domain; that stretch reads RIAVLKFPGT…WLGLISWLRR (211 aa). Cys-85 (nucleophile) is an active-site residue. Catalysis depends on residues His-183, Glu-185, and His-191.

Part of the FGAM synthase complex composed of 1 PurL, 1 PurQ and 2 PurS subunits.

The protein resides in the cytoplasm. The enzyme catalyses N(2)-formyl-N(1)-(5-phospho-beta-D-ribosyl)glycinamide + L-glutamine + ATP + H2O = 2-formamido-N(1)-(5-O-phospho-beta-D-ribosyl)acetamidine + L-glutamate + ADP + phosphate + H(+). It catalyses the reaction L-glutamine + H2O = L-glutamate + NH4(+). It participates in purine metabolism; IMP biosynthesis via de novo pathway; 5-amino-1-(5-phospho-D-ribosyl)imidazole from N(2)-formyl-N(1)-(5-phospho-D-ribosyl)glycinamide: step 1/2. Its function is as follows. Part of the phosphoribosylformylglycinamidine synthase complex involved in the purines biosynthetic pathway. Catalyzes the ATP-dependent conversion of formylglycinamide ribonucleotide (FGAR) and glutamine to yield formylglycinamidine ribonucleotide (FGAM) and glutamate. The FGAM synthase complex is composed of three subunits. PurQ produces an ammonia molecule by converting glutamine to glutamate. PurL transfers the ammonia molecule to FGAR to form FGAM in an ATP-dependent manner. PurS interacts with PurQ and PurL and is thought to assist in the transfer of the ammonia molecule from PurQ to PurL. The chain is Phosphoribosylformylglycinamidine synthase subunit PurQ from Pyrobaculum aerophilum (strain ATCC 51768 / DSM 7523 / JCM 9630 / CIP 104966 / NBRC 100827 / IM2).